The following is a 572-amino-acid chain: Fatty acid amide hydrolase 1 (572 aa).

Residues Met-1–Ala-14 form the signal peptide. The stretch at Ile-32 to Ile-63 forms a coiled coil. Residues Lys-139 and Ser-214 each act as charge relay system in the active site. Substrate contacts are provided by residues Ser-214 and Val-235–Ser-238. Catalysis depends on Ser-238, which acts as the Acyl-ester intermediate.

The protein belongs to the amidase family. As to expression, expressed in the pharynx, some pharyngeal neurons, the posterior intestine and anal depressor muscles.

The enzyme catalyses N-(5Z,8Z,11Z,14Z-eicosatetraenoyl)-ethanolamine + H2O = ethanolamine + (5Z,8Z,11Z,14Z)-eicosatetraenoate. It catalyses the reaction (9Z)-octadecenamide + H2O = (9Z)-octadecenoate + NH4(+). The catalysed reaction is (5Z,8Z,11Z,14Z,17Z-eicosapentaenoyl) ethanolamine + H2O = (5Z,8Z,11Z,14Z,17Z)-eicosapentaenoate + ethanolamine. It carries out the reaction N-(9Z-hexadecenoyl) ethanolamine + H2O = (9Z)-hexadecenoate + ethanolamine. The enzyme catalyses N-(9Z-octadecenoyl) ethanolamine + H2O = ethanolamine + (9Z)-octadecenoate. It catalyses the reaction N-octadecanoyl ethanolamine + H2O = octadecanoate + ethanolamine. The catalysed reaction is N-docosanoyl-ethanolamine + H2O = docosanoate + ethanolamine. It carries out the reaction N-(15Z-tetracosenoyl)-ethanolamine + H2O = (15Z)-tetracosenoate + ethanolamine. The enzyme catalyses N-hexadecanoylethanolamine + H2O = ethanolamine + hexadecanoate. It catalyses the reaction N-(9Z,12Z-octadecadienoyl)-ethanolamine + H2O = ethanolamine + (9Z,12Z)-octadecadienoate. The catalysed reaction is (9Z)-octadecenoate + glycine = N-(9Z-octadecenoyl)glycine + H2O. It carries out the reaction N-(5Z,8Z,11Z,14Z)-eicosatetraenoyl-glycine + H2O = (5Z,8Z,11Z,14Z)-eicosatetraenoate + glycine. The enzyme catalyses N-(5Z,8Z,11Z,14Z-eicosatetraenoyl)-L-serine + H2O = (5Z,8Z,11Z,14Z)-eicosatetraenoate + L-serine. Functionally, catalyzes the hydrolysis of endogenous amidated lipids like anandamide (AEA or N-(5Z,8Z,11Z,14Z-eicosatetraenoyl)-ethanolamine) and eicosapentaneoyl ethanolamide (EPEA or (5Z,8Z,11Z,14Z,17Z-eicosapentaenoyl) ethanolamine), as well as other fatty amides, to their corresponding fatty acids, thereby regulating the signaling functions of these molecules. EPEA promotes dauer formation and may constitute a signal of high nutrient availability. Breakdown of EPEA may promote lifespan extension when nutrient availability is high. Facilitates axon regeneration after injury by degradating inhibitory compounds such as AEA. FAAH cooperates with PM20D1 in the hydrolysis of amino acid-conjugated fatty acids such as N-fatty acyl glycine and N-fatty acyl-L-serine, thereby acting as a physiological regulator of specific subsets of intracellular, but not of extracellular, N-fatty acyl amino acids. The protein is Fatty acid amide hydrolase 1 of Caenorhabditis elegans.